The sequence spans 634 residues: Probable potassium transport system protein Kup (634 aa).

The next 12 membrane-spanning stretches (helical) occupy residues 21 to 41 (LVIGAIGVVFGDIGTSPLYTL), 58 to 78 (VLGILSLVFWALMLVVTLKYV), 110 to 130 (MYVVGILGIFGASLFFGDGVI), 152 to 172 (PFVVPITLVVLGMLFLAQRFG), 179 to 199 (AFGPITLLWFFALGAIGVYNM), 223 to 243 (WHAVFVLGAVVLAVTGGEALY), 258 to 278 (WQFVVLPMLTLTYLGQGALML), 296 to 316 (ALYPMIVLATAATVIASQALI), 348 to 368 (IYVPAVNWCLLALVAVAVIGF), 377 to 397 (AYGVSVTGTMLITTVLMIIYA), 403 to 423 (VPAPLLWLFALVFLAVDCAFF), and 427 to 447 (IIKFLDGAWFPLLLGLILFTL).

It belongs to the HAK/KUP transporter (TC 2.A.72) family.

The protein localises to the cell inner membrane. The catalysed reaction is K(+)(in) + H(+)(in) = K(+)(out) + H(+)(out). Functionally, transport of potassium into the cell. Likely operates as a K(+):H(+) symporter. The protein is Probable potassium transport system protein Kup of Xanthomonas euvesicatoria pv. vesicatoria (strain 85-10) (Xanthomonas campestris pv. vesicatoria).